A 259-amino-acid chain; its full sequence is Acyl-[acyl-carrier-protein]--UDP-N-acetylglucosamine O-acyltransferase (259 aa).

It belongs to the transferase hexapeptide repeat family. LpxA subfamily. As to quaternary structure, homotrimer.

Its subcellular location is the cytoplasm. It catalyses the reaction a (3R)-hydroxyacyl-[ACP] + UDP-N-acetyl-alpha-D-glucosamine = a UDP-3-O-[(3R)-3-hydroxyacyl]-N-acetyl-alpha-D-glucosamine + holo-[ACP]. The protein operates within glycolipid biosynthesis; lipid IV(A) biosynthesis; lipid IV(A) from (3R)-3-hydroxytetradecanoyl-[acyl-carrier-protein] and UDP-N-acetyl-alpha-D-glucosamine: step 1/6. Involved in the biosynthesis of lipid A, a phosphorylated glycolipid that anchors the lipopolysaccharide to the outer membrane of the cell. The protein is Acyl-[acyl-carrier-protein]--UDP-N-acetylglucosamine O-acyltransferase of Psychrobacter cryohalolentis (strain ATCC BAA-1226 / DSM 17306 / VKM B-2378 / K5).